The chain runs to 341 residues: 5-formaminoimidazole-4-carboxamide-1-(beta)-D-ribofuranosyl 5'-monophosphate synthetase (341 aa).

2 residues coordinate 5-amino-1-(5-phospho-beta-D-ribosyl)imidazole-4-carboxamide: H10 and T77. One can recognise an ATP-grasp domain in the interval 106-317 (DRSLKERLMR…YYGLLFDEPI (212 aa)). ATP-binding positions include 132–188 (DTLV…VLAY) and E210. Position 238 (N238) interacts with 5-amino-1-(5-phospho-beta-D-ribosyl)imidazole-4-carboxamide. E277 and E290 together coordinate Mg(2+).

The protein belongs to the phosphohexose mutase family. Mg(2+) is required as a cofactor. Requires Mn(2+) as cofactor.

The enzyme catalyses 5-amino-1-(5-phospho-beta-D-ribosyl)imidazole-4-carboxamide + formate + ATP = 5-formamido-1-(5-phospho-D-ribosyl)imidazole-4-carboxamide + ADP + phosphate. It participates in purine metabolism; IMP biosynthesis via de novo pathway; 5-formamido-1-(5-phospho-D-ribosyl)imidazole-4-carboxamide from 5-amino-1-(5-phospho-D-ribosyl)imidazole-4-carboxamide (formate route): step 1/1. In terms of biological role, catalyzes the ATP- and formate-dependent formylation of 5-aminoimidazole-4-carboxamide-1-beta-d-ribofuranosyl 5'-monophosphate (AICAR) to 5-formaminoimidazole-4-carboxamide-1-beta-d-ribofuranosyl 5'-monophosphate (FAICAR) in the absence of folates. The chain is 5-formaminoimidazole-4-carboxamide-1-(beta)-D-ribofuranosyl 5'-monophosphate synthetase from Cenarchaeum symbiosum (strain A).